A 239-amino-acid chain; its full sequence is RING finger protein 151 (239 aa).

Residues Cys20 to Arg58 form an RING-type zinc finger. The TRAF-type zinc finger occupies Glu101–Glu156.

Interacts with DTNBP1. In terms of tissue distribution, expressed in testis. Expressed in round spermatids of the stages VII-VIII semniniferous tubules. Expressed in elongating spermatids of stages VIII-IX seminiferous tubules (at protein level).

It is found in the cytoplasm. The protein resides in the nucleus. May be involved in acrosome formation of spermatids. This Mus musculus (Mouse) protein is RING finger protein 151 (Rnf151).